Here is a 274-residue protein sequence, read N- to C-terminus: Penicillin-insensitive murein endopeptidase (274 aa).

Positions 1 to 19 (MNKTAIALLALLASSASLA) are cleaved as a signal peptide. 3 disulfides stabilise this stretch: Cys-44-Cys-265, Cys-187-Cys-235, and Cys-216-Cys-223. The Zn(2+) site is built by His-110, His-113, Asp-120, Asp-147, His-150, and His-211. Residues 227–274 (PLPPPGDGCGAELQSWFEPPKPGTTKPEKKTPPPLPPSCQALLDEHVI) form a disordered region.

It belongs to the peptidase M74 family. In terms of assembly, dimer. Requires Zn(2+) as cofactor.

The protein resides in the periplasm. In terms of biological role, murein endopeptidase that cleaves the D-alanyl-meso-2,6-diamino-pimelyl amide bond that connects peptidoglycan strands. Likely plays a role in the removal of murein from the sacculus. This chain is Penicillin-insensitive murein endopeptidase, found in Escherichia coli (strain SE11).